The primary structure comprises 1052 residues: MMGTSRCVILLFALLLWAANAAPPEIHTTRPNVPEEIKRPNSTEIETPAVKQLETPSIFLLTTLEVAEADVDSTLETMKDRNKKNSAKLSKIGNNMKSLLSVFSVFGGFLSLLSVVTTTSDLQVISDMFTGVNRKLDQINDKLDKLDNSVELQGLLTNYIPWQYSVKNGIEKLIETYKKMVEETDMNKRRLMAENFILFFENNQIESNINNLIKLTTTTDAVHQNMLFNELLDEAGCDIIRLTRIYMHVRRIFYQGTQLVLAYNSFKQMDPPEMKKYLNALIFIRNMYQSRVWHCKETTIAQSKKDIKDIVKTNAKFGITTVLRKINSELSRKYPWYSWSIVTVKKMLANQRNSTLGNQFYEMEAVGPHGSNFVVIWQGFKEHSQCEDIQKANTIAVLTICKSCHQSHVFTPSNMLNKNTCPNNQYPQVKAFIDRREPFRDEIQRKKSDVFWVAAGFKAPGNPCNHGCNGHGECKVVPYTDQFQCFCHGNYEGKMCQKKIQMKRDISKLISDLQTGYKNAFNVPSLTNILIQGENLAKQLKKMIQRIDNQFELTHILVKYISDLQKLDYILKISFNYSKKKITVDAFSRRMKAFLSLNPVDFIFQQLSNAILAEGFTDIQGKDFFNTFKRMIASNRDACTAPYGNEATILLERLSRLDLTAAESILAYYSFESNYLNPANMKRMLENAKQLVRDSKRRMRSYARYWERTSCPPLNVTHLTQTGCGALLSFEGMKVKLSCDGGRAAVPQNIECVNVNGNLQWSATPKCESSWSRWSKWSACASTCGNATQSRRRRCLGQSESEKCIGPSKQVRKCFVEDCCQEKYGKFKCDNNKCISLSRVCDGNDDCRNAEDESKSRCKYLRSGDRIALRNMAYSQEWLSVQYTDAVQADLYYGRAYLNHCIKGDHVTSSEWNSCAGQSLLIYGNYENGKIGKAIRFGDKIAMYYRKTNYHYRWFICYPTYCMTYTCPKKAGSFTFGPNGGCDEYEFYIINYNDKLSRDPVKPGDVITLANNRGSVKGNGYNRNININDCTVKRAQDDRIECNANAWQIFIK.

Positions Met-1–Ala-21 are cleaved as a signal peptide. Residues Ala-22–Thr-29 constitute a propeptide that is removed on maturation. An N-linked (GlcNAc...) asparagine glycan is attached at Asn-41. The stretch at Thr-130 to Glu-194 forms a coiled coil. Asn-353 carries an N-linked (GlcNAc...) asparagine glycan. An EGF-like domain is found at Pro-460–Gln-497. 3 disulfides stabilise this stretch: Cys-464–Cys-474, Cys-468–Cys-485, and Cys-487–Cys-496. 2 N-linked (GlcNAc...) asparagine glycosylation sites follow: Asn-576 and Asn-715. Residues Thr-709–Ser-769 form the Sushi domain. 7 disulfides stabilise this stretch: Cys-711–Cys-752, Cys-739–Cys-767, Cys-780–Cys-814, Cys-784–Cys-820, Cys-795–Cys-804, Cys-829–Cys-847, and Cys-841–Cys-858. The region spanning Glu-768 to Gln-821 is the TSP type-1 domain. N-linked (GlcNAc...) asparagine glycosylation is present at Asn-786. Positions Cys-819 to Lys-859 constitute an LDL-receptor class A domain.

Monomer. As to expression, expressed by the salivary gland.

Its subcellular location is the secreted. The sequence is that of SE-cephalotoxin from Acanthosepion esculentum (Golden cuttlefish).